Consider the following 368-residue polypeptide: POU domain, class 3, transcription factor 1 (368 aa).

Over residues 1 to 16 (MATTAQYIPRNNSLPS) the composition is skewed to polar residues. Disordered regions lie at residues 1 to 28 (MATT…DRMH), 69 to 88 (TDWT…ASVQ), 100 to 134 (SHLV…NGHQ), and 147 to 193 (SPQP…PSSD). A compositionally biased stretch (basic and acidic residues) spans 79–88 (QAEHNKASVQ). Over residues 105-134 (QPTQNSHHGSWAPTTTHHLSPLSPASNGHQ) the composition is skewed to polar residues. Basic and acidic residues predominate over residues 155 to 170 (GLRDPLHDDAGSHDNQ). A POU-specific domain is found at 187–261 (EDAPSSDDLE…LLNKWLEETD (75 aa)). Positions 279 to 338 (KRKKRTSIEVGVKGALENHFLKCPKPSAHEITTLAGTLQLEKEVVRVWFCNRRQKEKRMT) form a DNA-binding region, homeobox.

The protein belongs to the POU transcription factor family. Class-3 subfamily. As to expression, predominantly expressed in the embryonic and adult central nervous system.

The protein resides in the nucleus. In terms of biological role, transcription factor that may play important roles in patterning the embryonic brain. Could directly respond to the reception of the sonic hedgehog (shh) signal. This is POU domain, class 3, transcription factor 1 (pou3f1) from Danio rerio (Zebrafish).